A 333-amino-acid chain; its full sequence is Lipoyl synthase (333 aa).

A disordered region spans residues 1-29 (MTDSAAGATEVATPATPSNKPYDATAKQK). [4Fe-4S] cluster is bound by residues Cys-80, Cys-85, Cys-91, Cys-106, Cys-110, Cys-113, and Ser-320. Residues 91 to 309 (CFGKGTATFM…EEKAYEMGFT (219 aa)) form the Radical SAM core domain.

The protein belongs to the radical SAM superfamily. Lipoyl synthase family. Requires [4Fe-4S] cluster as cofactor.

Its subcellular location is the cytoplasm. It catalyses the reaction [[Fe-S] cluster scaffold protein carrying a second [4Fe-4S](2+) cluster] + N(6)-octanoyl-L-lysyl-[protein] + 2 oxidized [2Fe-2S]-[ferredoxin] + 2 S-adenosyl-L-methionine + 4 H(+) = [[Fe-S] cluster scaffold protein] + N(6)-[(R)-dihydrolipoyl]-L-lysyl-[protein] + 4 Fe(3+) + 2 hydrogen sulfide + 2 5'-deoxyadenosine + 2 L-methionine + 2 reduced [2Fe-2S]-[ferredoxin]. Its pathway is protein modification; protein lipoylation via endogenous pathway; protein N(6)-(lipoyl)lysine from octanoyl-[acyl-carrier-protein]: step 2/2. In terms of biological role, catalyzes the radical-mediated insertion of two sulfur atoms into the C-6 and C-8 positions of the octanoyl moiety bound to the lipoyl domains of lipoate-dependent enzymes, thereby converting the octanoylated domains into lipoylated derivatives. In Ralstonia pickettii (strain 12J), this protein is Lipoyl synthase.